Consider the following 255-residue polypeptide: Pyridoxine 5'-phosphate synthase (255 aa).

N6 provides a ligand contact to 3-amino-2-oxopropyl phosphate. A 1-deoxy-D-xylulose 5-phosphate-binding site is contributed by 8-9 (DH). R17 serves as a coordination point for 3-amino-2-oxopropyl phosphate. The Proton acceptor role is filled by H41. 1-deoxy-D-xylulose 5-phosphate-binding residues include R43 and H48. The active-site Proton acceptor is the E68. T96 provides a ligand contact to 1-deoxy-D-xylulose 5-phosphate. H208 serves as the catalytic Proton donor. 3-amino-2-oxopropyl phosphate-binding positions include G209 and 230–231 (GQ).

Belongs to the PNP synthase family. Homooctamer; tetramer of dimers.

Its subcellular location is the cytoplasm. It catalyses the reaction 3-amino-2-oxopropyl phosphate + 1-deoxy-D-xylulose 5-phosphate = pyridoxine 5'-phosphate + phosphate + 2 H2O + H(+). It functions in the pathway cofactor biosynthesis; pyridoxine 5'-phosphate biosynthesis; pyridoxine 5'-phosphate from D-erythrose 4-phosphate: step 5/5. Catalyzes the complicated ring closure reaction between the two acyclic compounds 1-deoxy-D-xylulose-5-phosphate (DXP) and 3-amino-2-oxopropyl phosphate (1-amino-acetone-3-phosphate or AAP) to form pyridoxine 5'-phosphate (PNP) and inorganic phosphate. The sequence is that of Pyridoxine 5'-phosphate synthase from Campylobacter lari (strain RM2100 / D67 / ATCC BAA-1060).